The primary structure comprises 411 residues: Secretion apparatus protein BsaZ (411 aa).

4 helical membrane passes run 28-48 (IVAL…VDLT), 80-100 (IAAP…LVQS), 137-157 (ALLY…LYHA), and 175-195 (IVLT…VLIL). Positions 341–411 (AANRGGPPPE…APARTGDQNA (71 aa)) are disordered. Residues 370–404 (DACADNAFPDDAPPGAAAPNAGSPDSPAPDGGAPA) show a composition bias toward low complexity.

It belongs to the type III secretion exporter family.

The protein resides in the cell membrane. Functionally, part of the bsa type III secretion system, is involved in the intracellular replication of invading bacteria inside the host cell. Probably necessary for the lysis of the vacuole membrane and escape into the host cell cytoplasm. The protein is Secretion apparatus protein BsaZ (bsaZ) of Burkholderia pseudomallei (strain 1106a).